The sequence spans 719 residues: DNA replication licensing factor MCM7 (719 aa).

A2 carries the post-translational modification N-acetylalanine. Glycyl lysine isopeptide (Lys-Gly) (interchain with G-Cter in SUMO2) cross-links involve residues K15 and K28. The residue at position 314 (S314) is a Phosphoserine. One can recognise an MCM domain in the interval 332-538; the sequence is FYEKLAASIA…NDLRLAQHIT (207 aa). Residue Y345 participates in ATP binding. S365 is modified (phosphoserine). G384, A386, K387, S388, and N489 together coordinate ATP. S500 is subject to Phosphoserine. Residues 513–516 carry the Arginine finger motif; sequence SRFD. Position 514 (R514) interacts with ATP. The interval 521-564 is interaction with RAD17; sequence IQDRPDRDNDLRLAQHITYVHQHSRQPPAQFEPLDMKLMRRYIA. The interval 577 to 719 is interaction with ATRIP; it reads LADYITAAYV…NTSRTRITFV (143 aa). R604 contributes to the ATP binding site. At S678 the chain carries Phosphoserine.

The protein belongs to the MCM family. In terms of assembly, component of the MCM2-7 complex. The complex forms a toroidal hexameric ring with the proposed subunit order MCM2-MCM6-MCM4-MCM7-MCM3-MCM5. Component of the CMG helicase complex, a hexameric ring of related MCM2-7 subunits stabilized by CDC45 and the tetrameric GINS complex. Interacts with the ATR-ATRIP complex and with RAD17. Interacts with TIPIN. Interacts with MCMBP. Interacts with ANKRD17. Component of the replisome complex composed of at least DONSON, MCM2, MCM7, PCNA and TICRR. O-glycosylated (O-GlcNAcylated), in a cell cycle-dependent manner. In terms of processing, ubiquitinated by ECS(LRR1) E3 ubiquitin-protein ligase complex when forks converge following formation of DNA interstrand cross-links. During mitosis, ubiquitinated by TRAIP when forks converge following formation of DNA interstrand cross-links. Short ubiquitin chains on MCM7 promote recruitment of DNA glycosylase NEIL3. If the interstrand cross-link cannot be cleaved by NEIL3, the ubiquitin chains continue to grow on MCM7, promoting the unloading of the CMG helicase complex by the VCP/p97 ATPase.

Its subcellular location is the nucleus. The protein localises to the chromosome. It catalyses the reaction ATP + H2O = ADP + phosphate + H(+). Its function is as follows. Acts as a component of the MCM2-7 complex (MCM complex) which is the replicative helicase essential for 'once per cell cycle' DNA replication initiation and elongation in eukaryotic cells. Core component of CDC45-MCM-GINS (CMG) helicase, the molecular machine that unwinds template DNA during replication, and around which the replisome is built. The active ATPase sites in the MCM2-7 ring are formed through the interaction surfaces of two neighboring subunits such that a critical structure of a conserved arginine finger motif is provided in trans relative to the ATP-binding site of the Walker A box of the adjacent subunit. The six ATPase active sites, however, are likely to contribute differentially to the complex helicase activity. Uncomplexed form does not show ATPase or DNA helicase. Required for S-phase checkpoint activation upon UV-induced damage. The chain is DNA replication licensing factor MCM7 (Mcm7) from Mus musculus (Mouse).